The following is a 286-amino-acid chain: Polygalacturonan/rhamnogalacturonan transport system permease protein YtcP (286 aa).

6 helical membrane-spanning segments follow: residues 9-29, 69-89, 106-126, 131-151, 176-196, and 251-271; these read LIYG…IHVI, LLVS…LSSL, MFLV…FLVV, LLDS…NLII, GIFF…ISLF, and TIKM…YPFI. Positions 69-271 constitute an ABC transmembrane type-1 domain; that stretch reads LLVSVFVTVI…IPVLLVYPFI (203 aa).

The protein belongs to the binding-protein-dependent transport system permease family. CysTW subfamily. The complex is probably composed of two ATP-binding proteins (MsmX), two transmembrane proteins (YtcP and YteP) and a solute-binding protein (YtcQ).

The protein localises to the cell membrane. Involved in pectin degradation. Part of the ABC transporter complex YtcQP-YteP involved in the uptake of polygalacturonan and rhamnogalacturonan type I. Responsible for the translocation of the substrate across the membrane. The chain is Polygalacturonan/rhamnogalacturonan transport system permease protein YtcP (ytcP) from Bacillus subtilis (strain 168).